A 74-amino-acid chain; its full sequence is Conotoxin Vi15a (74 aa).

The signal sequence occupies residues 1-19; sequence MMPVILLLLLSLAIRCADG. Residues 20–43 constitute a propeptide that is removed on maturation; sequence KAVQGDSDPSASLLTGDKNHDLPV. The residue at position 72 (W72) is a Tryptophan amide.

In terms of processing, contains four disulfide bonds. In terms of tissue distribution, expressed by the venom duct.

It is found in the secreted. The polypeptide is Conotoxin Vi15a (Conus virgo (Virgin cone)).